The sequence spans 351 residues: N-acetyl-gamma-glutamyl-phosphate reductase (351 aa).

Residue C154 is part of the active site.

Belongs to the NAGSA dehydrogenase family. Type 1 subfamily.

It is found in the cytoplasm. It carries out the reaction N-acetyl-L-glutamate 5-semialdehyde + phosphate + NADP(+) = N-acetyl-L-glutamyl 5-phosphate + NADPH + H(+). Its pathway is amino-acid biosynthesis; L-arginine biosynthesis; N(2)-acetyl-L-ornithine from L-glutamate: step 3/4. In terms of biological role, catalyzes the NADPH-dependent reduction of N-acetyl-5-glutamyl phosphate to yield N-acetyl-L-glutamate 5-semialdehyde. The polypeptide is N-acetyl-gamma-glutamyl-phosphate reductase (Synechocystis sp. (strain ATCC 27184 / PCC 6803 / Kazusa)).